The following is a 427-amino-acid chain: 3-phosphoshikimate 1-carboxyvinyltransferase (427 aa).

3-phosphoshikimate contacts are provided by Lys20, Ser21, and Arg25. Lys20 lines the phosphoenolpyruvate pocket. Gly92 and Arg120 together coordinate phosphoenolpyruvate. Residues Ser166, Gln168, Asp312, and Lys339 each contribute to the 3-phosphoshikimate site. Gln168 serves as a coordination point for phosphoenolpyruvate. Residue Asp312 is the Proton acceptor of the active site. 2 residues coordinate phosphoenolpyruvate: Arg343 and Arg385.

The protein belongs to the EPSP synthase family. In terms of assembly, monomer.

It localises to the cytoplasm. The enzyme catalyses 3-phosphoshikimate + phosphoenolpyruvate = 5-O-(1-carboxyvinyl)-3-phosphoshikimate + phosphate. Its pathway is metabolic intermediate biosynthesis; chorismate biosynthesis; chorismate from D-erythrose 4-phosphate and phosphoenolpyruvate: step 6/7. Functionally, catalyzes the transfer of the enolpyruvyl moiety of phosphoenolpyruvate (PEP) to the 5-hydroxyl of shikimate-3-phosphate (S3P) to produce enolpyruvyl shikimate-3-phosphate and inorganic phosphate. The polypeptide is 3-phosphoshikimate 1-carboxyvinyltransferase (Streptococcus mutans serotype c (strain ATCC 700610 / UA159)).